The primary structure comprises 170 residues: Adenine phosphoribosyltransferase (170 aa).

The protein belongs to the purine/pyrimidine phosphoribosyltransferase family. In terms of assembly, homodimer.

The protein resides in the cytoplasm. The enzyme catalyses AMP + diphosphate = 5-phospho-alpha-D-ribose 1-diphosphate + adenine. It participates in purine metabolism; AMP biosynthesis via salvage pathway; AMP from adenine: step 1/1. In terms of biological role, catalyzes a salvage reaction resulting in the formation of AMP, that is energically less costly than de novo synthesis. This Bacillus licheniformis (strain ATCC 14580 / DSM 13 / JCM 2505 / CCUG 7422 / NBRC 12200 / NCIMB 9375 / NCTC 10341 / NRRL NRS-1264 / Gibson 46) protein is Adenine phosphoribosyltransferase.